Consider the following 124-residue polypeptide: Glycine cleavage system H protein (124 aa).

Positions 22–103 (VFVVGITDNA…AYTAWIFKIK (82 aa)) constitute a Lipoyl-binding domain. K63 bears the N6-lipoyllysine mark.

The protein belongs to the GcvH family. As to quaternary structure, the glycine cleavage system is composed of four proteins: P, T, L and H. (R)-lipoate is required as a cofactor.

Functionally, the glycine cleavage system catalyzes the degradation of glycine. The H protein shuttles the methylamine group of glycine from the P protein to the T protein. This Bordetella pertussis (strain Tohama I / ATCC BAA-589 / NCTC 13251) protein is Glycine cleavage system H protein.